We begin with the raw amino-acid sequence, 266 residues long: 3',5'-cyclic-nucleotide phosphodiesterase alr5338 (266 aa).

Positions 14, 16, 56, 86, 155, 194, and 196 each coordinate Fe cation. Residues His16, Asp56, and 86–87 (NH) each bind AMP. His196 contacts AMP.

The protein belongs to the cyclic nucleotide phosphodiesterase class-III family. Fe(2+) is required as a cofactor. It depends on Mn(2+) as a cofactor.

The catalysed reaction is a nucleoside 3',5'-cyclic phosphate + H2O = a nucleoside 5'-phosphate + H(+). The enzyme catalyses 3',5'-cyclic AMP + H2O = AMP + H(+). It carries out the reaction 3',5'-cyclic GMP + H2O = GMP + H(+). With respect to regulation, activated by iron and manganese. Hydrolyzes cAMP to 5'-AMP. Plays an important regulatory role in modulating the intracellular concentration of cAMP, thereby influencing cAMP-dependent processes. Can also hydrolyze cGMP. This is 3',5'-cyclic-nucleotide phosphodiesterase alr5338 from Nostoc sp. (strain PCC 7120 / SAG 25.82 / UTEX 2576).